An 87-amino-acid polypeptide reads, in one-letter code: Large ribosomal subunit protein bL31B (87 aa).

It belongs to the bacterial ribosomal protein bL31 family. Type B subfamily. As to quaternary structure, part of the 50S ribosomal subunit.

In Pseudomonas paraeruginosa (strain DSM 24068 / PA7) (Pseudomonas aeruginosa (strain PA7)), this protein is Large ribosomal subunit protein bL31B.